Reading from the N-terminus, the 451-residue chain is Chromosomal replication initiator protein DnaA (451 aa).

The segment at 1–72 (MQSIEDIWQE…ANILQEITGR (72 aa)) is domain I, interacts with DnaA modulators. A domain II region spans residues 72–108 (RLFDVRFIDGEQEENFEYTVIKPNPALDEDGVEIGKH). Positions 109–325 (MLNPRYVFDT…GALIRVVAYS (217 aa)) are domain III, AAA+ region. Glycine 153, glycine 155, lysine 156, and threonine 157 together coordinate ATP. The interval 326-451 (SLVNKDITAG…KNLRKAQNMF (126 aa)) is domain IV, binds dsDNA.

The protein belongs to the DnaA family. As to quaternary structure, oligomerizes as a right-handed, spiral filament on DNA at oriC.

It localises to the cytoplasm. Plays an essential role in the initiation and regulation of chromosomal replication. ATP-DnaA binds to the origin of replication (oriC) to initiate formation of the DNA replication initiation complex once per cell cycle. Binds the DnaA box (a 9 base pair repeat at the origin) and separates the double-stranded (ds)DNA. Forms a right-handed helical filament on oriC DNA; dsDNA binds to the exterior of the filament while single-stranded (ss)DNA is stabiized in the filament's interior. The ATP-DnaA-oriC complex binds and stabilizes one strand of the AT-rich DNA unwinding element (DUE), permitting loading of DNA polymerase. After initiation quickly degrades to an ADP-DnaA complex that is not apt for DNA replication. Binds acidic phospholipids. The protein is Chromosomal replication initiator protein DnaA of Listeria monocytogenes serotype 4b (strain CLIP80459).